Reading from the N-terminus, the 372-residue chain is Isoliquiritigenin 2'-O-methyltransferase (372 aa).

5 residues coordinate S-adenosyl-L-methionine: G217, D240, D260, M261, and K274. H278 acts as the Proton acceptor in catalysis.

The protein belongs to the class I-like SAM-binding methyltransferase superfamily. Cation-independent O-methyltransferase family. COMT subfamily. As to quaternary structure, monomer. Homodimer. As to expression, roots (at protein level). Expressed mainly in roots, and to a lesser extent in root nodules. In the roots, expression is not detected in the root tip or the cells immediately behind the tip, but is detected in tissues starting 1.5-2.0 mm distal to the root tip. Detected in the epidermal and cortical cells of 2 day old roots, with lower levels in vascular tissue.

It carries out the reaction isoliquiritigenin + S-adenosyl-L-methionine = 2'-O-methylisoliquiritigenin + S-adenosyl-L-homocysteine + H(+). The enzyme catalyses licodione + S-adenosyl-L-methionine = 2'-O-methyllicodione + S-adenosyl-L-homocysteine + H(+). With respect to regulation, inhibited by 1 mM Co(2+), Cu(2+), Zn(2+) or Fe(2+). Non-competitively inhibited by S-adenosyl-L-homocysteine. Competitively inhibited by 2'-O-methylisoliquiritigenin. Functionally, methylates the 2'-hydroxyl of isoliquiritigenin and licodione. Does not methylate narigenin chalcone, caffeic acid or daidzein. Involved in the root nodulation initiation by promoting the biosynthesis of nod-inducing molecules. This is Isoliquiritigenin 2'-O-methyltransferase from Medicago sativa (Alfalfa).